The primary structure comprises 341 residues: L-threonine 3-dehydrogenase (341 aa).

Cysteine 38 provides a ligand contact to Zn(2+). Active-site charge relay system residues include threonine 40 and histidine 43. The Zn(2+) site is built by histidine 63, glutamate 64, cysteine 93, cysteine 96, cysteine 99, and cysteine 107. Residues isoleucine 175, aspartate 195, arginine 200, 262–264, and 286–287 each bind NAD(+); these read LGI and IY.

This sequence belongs to the zinc-containing alcohol dehydrogenase family. In terms of assembly, homotetramer. It depends on Zn(2+) as a cofactor.

The protein localises to the cytoplasm. The enzyme catalyses L-threonine + NAD(+) = (2S)-2-amino-3-oxobutanoate + NADH + H(+). The protein operates within amino-acid degradation; L-threonine degradation via oxydo-reductase pathway; glycine from L-threonine: step 1/2. Functionally, catalyzes the NAD(+)-dependent oxidation of L-threonine to 2-amino-3-ketobutyrate. The sequence is that of L-threonine 3-dehydrogenase from Salmonella gallinarum (strain 287/91 / NCTC 13346).